Here is a 534-residue protein sequence, read N- to C-terminus: Dolichol kinase (534 aa).

Residues 1–16 (MTRQCPPQESGAALSG) lie on the Cytoplasmic side of the membrane. The helical transmembrane segment at 17–37 (SVLAEAAVVFAVVLSIHAAVW) threads the bilayer. Residues 38–72 (DRYSWCAVALAVQAFYVQYKWDRLLQQGNAVFQFR) lie on the Extracellular side of the membrane. A helical membrane pass occupies residues 73 to 93 (MSANSGLLPASMVMPLLGLVM). The Cytoplasmic portion of the chain corresponds to 94–109 (KERCQTAGNPYFERFG). Residues 110–130 (IVVAATGMAVALFSSVLALGI) form a helical membrane-spanning segment. Residues 131-132 (TR) lie on the Extracellular side of the membrane. A helical transmembrane segment spans residues 133–153 (PVPTNTCAISGLAGGVIIYIM). The Cytoplasmic segment spans residues 154–161 (RHSLSVGE). The chain crosses the membrane as a helical span at residues 162–182 (VIEVLEVLLIFVYLNMILLYL). Residues 183 to 186 (LPRC) are Extracellular-facing. A helical transmembrane segment spans residues 187 to 207 (FTPGEALLVLGGISFVLNQLI). Over 208-220 (KRSLTESQGDPVD) the chain is Cytoplasmic. The helical transmembrane segment at 221-241 (FFLLVVVVGMVLMGVFFSTLF) threads the bilayer. Residues 242–252 (VFMDSGTWASS) lie on the Extracellular side of the membrane. The chain crosses the membrane as a helical span at residues 253–273 (IFFHLMTCVLGLGVVLPWLHW). At 274–293 (LIRRNPLLWLLQFLFYTETR) the chain is on the cytoplasmic side. A helical membrane pass occupies residues 294–314 (IYLLAYWSLLASVACLVVLYQ). Topologically, residues 315–333 (NAKRSSSESKKHRAPTITR) are extracellular. A helical membrane pass occupies residues 334–350 (KYFHFIVVATYIPGIIF). Over 351–355 (DRPLL) the chain is Cytoplasmic. Residues 356 to 376 (YVAATVCLAVFIFLEYVRYFR) traverse the membrane as a helical segment. The Extracellular segment spans residues 377–397 (IKPLGHTLRSLLSLFLDERDS). Residues 398-418 (GPLILTHIYLLLGMSLPIWLI) form a helical membrane-spanning segment. The Cytoplasmic segment spans residues 419–432 (PRPCTQKDSLEGAR). Residues 433 to 453 (ALVPYAGVLAVGVGDTVASIF) form a helical membrane-spanning segment. The Extracellular segment spans residues 454-468 (GSTMGEIRWPGTKKT). The interval 455–470 (STMGEIRWPGTKKTFE) is CTP-binding. A helical transmembrane segment spans residues 469 to 489 (FEGTMTSIFAQIISVALILIF). At 490-491 (DS) the chain is on the cytoplasmic side. A helical membrane pass occupies residues 492 to 512 (GVDLNYSYAWILGSISTVSLL). Over 513–534 (EAYTTQIDNLLLPLYLLILLMA) the chain is Extracellular.

It belongs to the polyprenol kinase family.

Its subcellular location is the endoplasmic reticulum membrane. The catalysed reaction is a di-trans,poly-cis-dolichol + CTP = a di-trans,poly-cis-dolichyl phosphate + CDP + H(+). It participates in protein modification; protein glycosylation. In terms of biological role, catalyzes CTP-mediated phosphorylation of dolichol, the terminal step in de novo dolichyl monophosphate (Dol-P) biosynthesis. Dol-P is a lipid carrier essential for the synthesis of N-linked and O-linked oligosaccharides and for GPI anchors. This is Dolichol kinase from Mus musculus (Mouse).